Here is a 284-residue protein sequence, read N- to C-terminus: Interferon antagonist OPG039 (284 aa).

ANK repeat units follow at residues 29–58 (NGHSVLYYAIADNNVRLVCTLLNAGALKNL), 60–89 (DNEFPLHQAATLEDTKIVKILLFSGMDDSQ), 93–122 (KGNTALYYAVDSGNMQTVKLFVKKNWRLMF), 127–157 (GWKTSFYHAVMLNDVSIVSYFLSEIPSPFDL), 159–188 (ILLSCIHTTIKNGHVDMMILLLDYMTSTNT), and 192–221 (LFIPDIKLAIDNKDIEMLQALFKYDINIYS).

It belongs to the orthopoxvirus OPG039 family.

The protein localises to the host cytoplasm. It localises to the host nucleus. Inhibits antiviral activity induced by type I interferons. Does not block signal transduction of IFN, but is important to counter the host antiviral state induced by a pre-treatment with IFN. Plays a role in the inhibition of host NF-kappa-B activation by preventing the acetylation of the RELA/p65 subunit of NF-kappaB. This chain is Interferon antagonist OPG039 (OPG039), found in Cynomys gunnisoni (Gunnison's prairie dog).